The sequence spans 24 residues: Ranatuerin-4 (24 aa).

Cys-18 and Cys-24 are disulfide-bonded.

Belongs to the frog skin active peptide (FSAP) family. Ranatuerin subfamily. In terms of tissue distribution, expressed by the skin glands.

The protein resides in the secreted. Its function is as follows. Antibacterial activity against Gram-positive bacterium S.aureus (MIC=55 uM). Shows no detectable hemolytic activity towards human erythrocytes. The chain is Ranatuerin-4 from Aquarana catesbeiana (American bullfrog).